The chain runs to 383 residues: MHC class I polypeptide-related sequence A (383 aa).

An N-terminal signal peptide occupies residues 1–23 (MGLGPVFLLLAGIFPFAPPGAAA). The Extracellular portion of the chain corresponds to 24–307 (EPHSLRYNLT…GKVLVLQSHW (284 aa)). Asn31 carries N-linked (GlcNAc...) asparagine glycosylation. Cys59 and Cys64 form a disulfide bridge. N-linked (GlcNAc...) asparagine glycosylation is present at Asn79. A disulfide bond links Cys119 and Cys187. One can recognise an Ig-like C1-type domain in the interval 207–296 (PMVNVTRSEA…SGNHSTHPVP (90 aa)). N-linked (GlcNAc...) asparagine glycans are attached at residues Asn210, Asn220, and Asn261. Cys225 and Cys282 are disulfide-bonded. A helical membrane pass occupies residues 308–328 (QTFHVSAVAAAAIFVIIIFYV). Over 329–383 (RCCKKKTSAAEGPELVSLQVLDQHPVGTSDHRDATQLGFQPLMSDLGSTGSTEGA) the chain is Cytoplasmic. 2 S-palmitoyl cysteine lipidation sites follow: Cys330 and Cys331.

This sequence belongs to the MHC class I family. MIC subfamily. In terms of assembly, unlike classical MHC class I molecules, does not form a heterodimer with beta-2-microglobulin. Binds as a monomer to a KLRK1/NKG2D homodimer. KLRK1 forms a complex with HCST/DAP10 in which KLRK1 binds MICA while HCST acts as an adapter molecule which enables signal transduction. Interacts with PDIA6 on the surface of tumor cells, leading to disulfide bond reduction which is required for release of MICA from tumor cells. As to quaternary structure, (Microbial infection) Interacts with human cytomegalovirus/HHV-5 protein UL142. Post-translationally, N-glycosylated. Glycosylation is not essential for interaction with KLRK1/NKG2D but enhances complex formation. In terms of processing, proteolytically cleaved and released from the cell surface of tumor cells which impairs KLRK1/NKG2D expression and T-cell activation. Palmitoylated on cysteine residues in the cytoplasmic tail leading to its association with membrane microdomains enriched in cholesterol. Post-translationally, N-glycosylation is necessary for cell surface expression. In terms of processing, (Microbial infection) Ubiquitinated by human herpesvirus 8 protein K5, leading to degradation. Widely expressed with the exception of the central nervous system where it is absent. Expressed predominantly in gastric epithelium and also in monocytes, keratinocytes, endothelial cells, fibroblasts and in the outer layer of Hassal's corpuscles within the medulla of normal thymus. In skin, expressed mainly in the keratin layers, basal cells, ducts and follicles. Also expressed in many, but not all, epithelial tumors of lung, breast, kidney, ovary, prostate and colon. In thyomas, overexpressed in cortical and medullar epithelial cells. Tumors expressing MICA display increased levels of gamma delta T-cells.

Its subcellular location is the cell membrane. It localises to the cytoplasm. Its function is as follows. Widely expressed membrane-bound protein which acts as a ligand to stimulate an activating receptor KLRK1/NKG2D, expressed on the surface of essentially all human natural killer (NK), gammadelta T and CD8 alphabeta T-cells. Up-regulated in stressed conditions, such as viral and bacterial infections or DNA damage response, serves as signal of cellular stress, and engagement of KLRK1/NKG2D by MICA triggers NK-cells resulting in a range of immune effector functions, such as cytotoxicity and cytokine production. In Homo sapiens (Human), this protein is MHC class I polypeptide-related sequence A.